Here is an 898-residue protein sequence, read N- to C-terminus: Phosphoenolpyruvate carboxylase (898 aa).

Residues His-134 and Lys-564 contribute to the active site.

The protein belongs to the PEPCase type 1 family. Mg(2+) is required as a cofactor.

The enzyme catalyses oxaloacetate + phosphate = phosphoenolpyruvate + hydrogencarbonate. Forms oxaloacetate, a four-carbon dicarboxylic acid source for the tricarboxylic acid cycle. This Chromobacterium violaceum (strain ATCC 12472 / DSM 30191 / JCM 1249 / CCUG 213 / NBRC 12614 / NCIMB 9131 / NCTC 9757 / MK) protein is Phosphoenolpyruvate carboxylase.